The chain runs to 935 residues: DNA repair protein rev1 (935 aa).

A BRCT domain is found at 59–147 (SKSDLFHGLA…KILPWINYRT (89 aa)). Positions 162-178 (SKPSQPEGNLEDIQTSS) are enriched in polar residues. Positions 162–193 (SKPSQPEGNLEDIQTSSQEEEHDNEKDKTKES) are disordered. Positions 184–193 (DNEKDKTKES) are enriched in basic and acidic residues. The interval 235 to 245 (FFSSSRLHHLS) is interaction with target DNA. Residues R240 and 283–287 (DFDCF) each bind dCTP. The UmuC domain occupies 279 to 460 (LLHVDFDCFF…LSVQDLPGVG (182 aa)). Mg(2+)-binding residues include D283 and F284. The interaction with target DNA stretch occupies residues 310–312 (IKN). Residues 317–323 (SCNYEAR), N329, and D378 each bind dCTP. Residues D378 and E379 each contribute to the Mg(2+) site. 2 interaction with target DNA regions span residues 460-463 (GSSQ) and 517-525 (RRSISVDVN).

The protein belongs to the DNA polymerase type-Y family. The cofactor is Mg(2+).

Its subcellular location is the nucleus. The protein resides in the nucleolus. It is found in the mitochondrion. The protein localises to the cytoplasm. It localises to the cytoskeleton. Its subcellular location is the spindle. Deoxycytidyl transferase involved in DNA repair. Transfers a dCMP residue from dCTP to the 3'-end of a DNA primer in a template-dependent reaction. May assist in the first step in the bypass of abasic lesions by the insertion of a nucleotide opposite the lesion. Required for normal induction of mutations by physical and chemical agents. Involved in mitochondrial DNA mutagenesis. The chain is DNA repair protein rev1 from Schizosaccharomyces pombe (strain 972 / ATCC 24843) (Fission yeast).